Reading from the N-terminus, the 741-residue chain is NAD(P)H-quinone oxidoreductase subunit 5, chloroplastic (741 aa).

Helical transmembrane passes span tryptophan 9–phenylalanine 29, tryptophan 40–isoleucine 60, isoleucine 89–isoleucine 109, phenylalanine 125–isoleucine 145, isoleucine 147–threonine 167, glycine 185–phenylalanine 205, asparagine 219–alanine 239, threonine 258–alanine 278, phenylalanine 284–phenylalanine 304, leucine 327–isoleucine 347, alanine 354–cysteine 374, asparagine 396–serine 416, tryptophan 425–tyrosine 445, leucine 549–phenylalanine 569, valine 605–valine 625, and tyrosine 721–leucine 741.

It belongs to the complex I subunit 5 family. As to quaternary structure, NDH is composed of at least 16 different subunits, 5 of which are encoded in the nucleus.

It is found in the plastid. The protein resides in the chloroplast thylakoid membrane. It catalyses the reaction a plastoquinone + NADH + (n+1) H(+)(in) = a plastoquinol + NAD(+) + n H(+)(out). It carries out the reaction a plastoquinone + NADPH + (n+1) H(+)(in) = a plastoquinol + NADP(+) + n H(+)(out). Its function is as follows. NDH shuttles electrons from NAD(P)H:plastoquinone, via FMN and iron-sulfur (Fe-S) centers, to quinones in the photosynthetic chain and possibly in a chloroplast respiratory chain. The immediate electron acceptor for the enzyme in this species is believed to be plastoquinone. Couples the redox reaction to proton translocation, and thus conserves the redox energy in a proton gradient. The protein is NAD(P)H-quinone oxidoreductase subunit 5, chloroplastic (ndhF) of Guizotia abyssinica (Niger).